A 297-amino-acid polypeptide reads, in one-letter code: MPELPEVEVVRAGLAPAVTGATILGVEVFELRSLKRHDPLAGSFESLLTGRSMQTPARRGKFLWIPLDSSPRSAIVAHLGMSGQILLRDPGTVENGLLRIRLYIEHPEHGELWVHFVDQRLFGSMAVDALVPTVDGAPAGLGTDEALLPAQVSHIARDPLDPVFDDAAFAAVLARRRSGIKRVLLDQTLISGIGNIYADESLWAARIHYDHPATALSRPRVRTLLAELRRVLGRALAEGGTSFDAQYVNVNGASGYFSRSLHVYGRQGQPCDRCGTAIVRESFMNRGSHFCPRCQRM.

The Schiff-base intermediate with DNA role is filled by P2. The Proton donor role is filled by E3. The active-site Proton donor; for beta-elimination activity is K61. The DNA site is built by R120 and R176. The FPG-type zinc-finger motif lies at 262–296 (HVYGRQGQPCDRCGTAIVRESFMNRGSHFCPRCQR). R286 functions as the Proton donor; for delta-elimination activity in the catalytic mechanism.

Belongs to the FPG family. In terms of assembly, monomer. The cofactor is Zn(2+).

It catalyses the reaction Hydrolysis of DNA containing ring-opened 7-methylguanine residues, releasing 2,6-diamino-4-hydroxy-5-(N-methyl)formamidopyrimidine.. It carries out the reaction 2'-deoxyribonucleotide-(2'-deoxyribose 5'-phosphate)-2'-deoxyribonucleotide-DNA = a 3'-end 2'-deoxyribonucleotide-(2,3-dehydro-2,3-deoxyribose 5'-phosphate)-DNA + a 5'-end 5'-phospho-2'-deoxyribonucleoside-DNA + H(+). Involved in base excision repair of DNA damaged by oxidation or by mutagenic agents. Acts as a DNA glycosylase that recognizes and removes damaged bases. Has a preference for oxidized purines, such as 7,8-dihydro-8-oxoguanine (8-oxoG). Has AP (apurinic/apyrimidinic) lyase activity and introduces nicks in the DNA strand. Cleaves the DNA backbone by beta-delta elimination to generate a single-strand break at the site of the removed base with both 3'- and 5'-phosphates. The sequence is that of Formamidopyrimidine-DNA glycosylase from Leifsonia xyli subsp. xyli (strain CTCB07).